A 508-amino-acid polypeptide reads, in one-letter code: D-alanine--D-alanyl carrier protein ligase (508 aa).

Position 152 to 153 (152 to 153 (TS)) interacts with ATP. A D-alanine-binding site is contributed by D198. 293–298 (NTYGPT) serves as a coordination point for ATP. V302 serves as a coordination point for D-alanine. Residues D384, 396 to 399 (YRGR), and K495 each bind ATP. K495 is a binding site for D-alanine.

This sequence belongs to the ATP-dependent AMP-binding enzyme family. DltA subfamily.

Its subcellular location is the cytoplasm. The catalysed reaction is holo-[D-alanyl-carrier protein] + D-alanine + ATP = D-alanyl-[D-alanyl-carrier protein] + AMP + diphosphate. Its pathway is cell wall biogenesis; lipoteichoic acid biosynthesis. Functionally, catalyzes the first step in the D-alanylation of lipoteichoic acid (LTA), the activation of D-alanine and its transfer onto the D-alanyl carrier protein (Dcp) DltC. In an ATP-dependent two-step reaction, forms a high energy D-alanyl-AMP intermediate, followed by transfer of the D-alanyl residue as a thiol ester to the phosphopantheinyl prosthetic group of the Dcp. D-alanylation of LTA plays an important role in modulating the properties of the cell wall in Gram-positive bacteria, influencing the net charge of the cell wall. The protein is D-alanine--D-alanyl carrier protein ligase of Lactiplantibacillus plantarum (strain ATCC BAA-793 / NCIMB 8826 / WCFS1) (Lactobacillus plantarum).